Here is a 1220-residue protein sequence, read N- to C-terminus: ATP-dependent helicase/deoxyribonuclease subunit B (1220 aa).

The 281-residue stretch at 1 to 281 (MSMRFIVGRA…VFLTETHRFE (281 aa)) folds into the UvrD-like helicase ATP-binding domain. 8-15 (GRAGTGKS) serves as a coordination point for ATP. The 308-residue stretch at 283–590 (AGLKHLERFY…LVGSLDRSRN (308 aa)) folds into the UvrD-like helicase C-terminal domain. Cys-788 is a binding site for [4Fe-4S] cluster. A disordered region spans residues 989–1008 (LAEGSKGSEGSEGSEDSEDS). 3 residues coordinate [4Fe-4S] cluster: Cys-1128, Cys-1131, and Cys-1137. Over residues 1162–1171 (RVQSQDSEQY) the composition is skewed to polar residues. A disordered region spans residues 1162–1220 (RVQSQDSEQYPEQHPPTSVPGETSRRALQKDGGNSPRGQELIWLGEDEAGAGKEDDGHE). The span at 1211 to 1220 (GAGKEDDGHE) shows a compositional bias: basic and acidic residues.

The protein belongs to the helicase family. AddB/RexB type 1 subfamily. Heterodimer of AddA and AddB. Mg(2+) is required as a cofactor. It depends on [4Fe-4S] cluster as a cofactor.

Its function is as follows. The heterodimer acts as both an ATP-dependent DNA helicase and an ATP-dependent, dual-direction single-stranded exonuclease. Recognizes the chi site generating a DNA molecule suitable for the initiation of homologous recombination. The AddB subunit has 5' -&gt; 3' nuclease activity but not helicase activity. The protein is ATP-dependent helicase/deoxyribonuclease subunit B of Desulfitobacterium hafniense (strain Y51).